Here is a 167-residue protein sequence, read N- to C-terminus: MNDFTPKFRIGNGYDIHRLVTGRKLIIGGVNLKHPDNLGLDGHSDADVLTHSIMDALLGALSLGDIGKYFPPSDDKWKDVDSLILLSKVIDLVRKQGWEINNIDSVLVAERPKIKPFVEIMKKNLSNTLKIDNSFIGIKATTNEKLGPEGREEGISCHSVVLLEKKE.

Residues D15 and H17 each contribute to the a divalent metal cation site. Residues D15–H17 and H43–S44 each bind 4-CDP-2-C-methyl-D-erythritol 2-phosphate. H51 contributes to the a divalent metal cation binding site. 4-CDP-2-C-methyl-D-erythritol 2-phosphate-binding positions include D65 to G67, T141 to E144, and R151.

The protein belongs to the IspF family. In terms of assembly, homotrimer. The cofactor is a divalent metal cation.

It catalyses the reaction 4-CDP-2-C-methyl-D-erythritol 2-phosphate = 2-C-methyl-D-erythritol 2,4-cyclic diphosphate + CMP. The protein operates within isoprenoid biosynthesis; isopentenyl diphosphate biosynthesis via DXP pathway; isopentenyl diphosphate from 1-deoxy-D-xylulose 5-phosphate: step 4/6. Its function is as follows. Involved in the biosynthesis of isopentenyl diphosphate (IPP) and dimethylallyl diphosphate (DMAPP), two major building blocks of isoprenoid compounds. Catalyzes the conversion of 4-diphosphocytidyl-2-C-methyl-D-erythritol 2-phosphate (CDP-ME2P) to 2-C-methyl-D-erythritol 2,4-cyclodiphosphate (ME-CPP) with a corresponding release of cytidine 5-monophosphate (CMP). This is 2-C-methyl-D-erythritol 2,4-cyclodiphosphate synthase from Prochlorococcus marinus (strain MIT 9312).